Reading from the N-terminus, the 662-residue chain is F-box/WD repeat-containing protein pof10 (662 aa).

The segment covering 1–16 (MKSEPTSLDFTSSNLR) has biased composition (polar residues). Positions 1 to 27 (MKSEPTSLDFTSSNLRRMNRDHSSNNT) are disordered. The F-box domain occupies 28-74 (NRTVLNLPKEILIIIFSFLDPRSLLSAQCTCKYWKKLLSDDLSWRTA). 3 WD repeats span residues 215-260 (SHAD…SLQS), 263-302 (FRSSQILSLCFRPKYKMLLVDTFNYELNSYQLYLIPGYAR), and 429-468 (TAYSNFPITDIYLNEVAMVVGSASGYCGVYDTVTGNFLKK). Residues 581–600 (SEEEIIAYVTMLSQEEEAKR) enclose the UIM 1 domain. A disordered region spans residues 617–645 (ENDEQATSSLNALSSNHEPPQEQANVAEL). Over residues 621-640 (QATSSLNALSSNHEPPQEQA) the composition is skewed to polar residues. The UIM 2 domain maps to 646-662 (NEQEQIELAMRLSLMEM).

In terms of assembly, part of a SCF (SKP1-cullin-F-box) protein ligase complex. Interacts with skp1.

Its subcellular location is the cytoplasm. In terms of biological role, probably recognizes and binds to some phosphorylated proteins and promotes their ubiquitination and degradation. In Schizosaccharomyces pombe (strain 972 / ATCC 24843) (Fission yeast), this protein is F-box/WD repeat-containing protein pof10 (pof10).